The chain runs to 452 residues: Tripartite motif-containing protein 49D (452 aa).

The segment at 15 to 56 adopts an RING-type zinc-finger fold; that stretch reads CPICLNYFIDPVTIDCGHSFCRPCFYLNWQDIPILTQCFECL. The segment at 88-129 adopts a B box-type zinc-finger fold; it reads SEEQMCGTHRETKKIFCEVDRSLLCLLCSSSLEHRYHRHCPA. Cysteine 93, histidine 96, cysteine 115, and histidine 121 together coordinate Zn(2+). Positions 269–452 constitute a B30.2/SPRY domain; the sequence is ELRAGPITGL…LRPIFCCVHL (184 aa).

The protein belongs to the TRIM/RBCC family.

The polypeptide is Tripartite motif-containing protein 49D (Homo sapiens (Human)).